A 947-amino-acid chain; its full sequence is Protocadherin alpha-4 (947 aa).

Residues 1 to 29 (MEFSWGSGQESQRLLLSFLFLAIWEPGNS) form the signal peptide. 6 consecutive Cadherin domains span residues 30–133 (QLHY…PPTF), 134–242 (PTTQ…SPVF), 243–350 (DRSL…APEL), 351–455 (EFKS…APAF), 456–565 (AQPE…APTL), and 573–681 (SGGI…APSR). The Extracellular portion of the chain corresponds to 30-697 (QLHYSIPEEA…NAEASLVDVN (668 aa)). A disulfide bond links Cys96 and Cys102. Asn257 and Asn265 each carry an N-linked (GlcNAc...) asparagine glycan. Asn548 is a glycosylation site (N-linked (GlcNAc...) asparagine). The chain crosses the membrane as a helical span at residues 698–718 (VYLIIAICAVSSLLVLTLLLY). Residues 719–947 (SALRCSTVPS…GNSTTDNSDQ (229 aa)) are Cytoplasmic-facing. PXXP repeat units follow at residues 734 to 737 (PPKP), 774 to 777 (PSLS), 796 to 799 (PRQP), 829 to 832 (PGGP), 870 to 873 (PGNP), and 888 to 891 (PGSP). The 6 X 4 AA repeats of P-X-X-P stretch occupies residues 734-891 (PPKPVMVCSS…PDKFIIPGSP (158 aa)). Positions 738–947 (VMVCSSAVGS…GNSTTDNSDQ (210 aa)) are required for interaction with FYN. Disordered regions lie at residues 761–805 (GEYP…DWRY) and 824–853 (ILRAGPGGPDQQWPTVSSATPEPEAGEVSP). Residues 897 to 947 (RQESANNQIDKSDFITFGKKEETKKKKKKKKGNKTQEKKEKGNSTTDNSDQ) are disordered. The span at 906 to 920 (DKSDFITFGKKEETK) shows a compositional bias: basic and acidic residues.

As to quaternary structure, forms homodimers in trans (molecules expressed by two different cells). Forms promiscuous heterodimers in cis (at the plasma membrane of the same cell) with other protocadherins. Interacts with FYN. Detected in brain.

It localises to the cell membrane. Its function is as follows. Calcium-dependent cell-adhesion protein involved in cells self-recognition and non-self discrimination. Thereby, it is involved in the establishment and maintenance of specific neuronal connections in the brain. This Rattus norvegicus (Rat) protein is Protocadherin alpha-4.